The following is a 244-amino-acid chain: MKIDILTLFPEMFVSPFNESIIKRAREQGIITINITNIRDFAQDRQQQVDDYPYGGGAGMVLKANVLGTAIEEVKGPDTWVLYMSPQGKPLNQDRVWELARRKELLIVCGHYEGIDERVMAMVDEEISIGDYILTGGELPAMVLVDAIARLIPGVLGDENSAMEESFSCSLLEYPQYTRPASYGEQEVPEVLLSGHHENIRRWRKKQSLLRTLLKRPDLLLKKCFDEEEKSLLEEILFHRENKR.

Residues Gly-110 and 129 to 134 (IGDYIL) each bind S-adenosyl-L-methionine.

Belongs to the RNA methyltransferase TrmD family. In terms of assembly, homodimer.

It is found in the cytoplasm. It catalyses the reaction guanosine(37) in tRNA + S-adenosyl-L-methionine = N(1)-methylguanosine(37) in tRNA + S-adenosyl-L-homocysteine + H(+). In terms of biological role, specifically methylates guanosine-37 in various tRNAs. The sequence is that of tRNA (guanine-N(1)-)-methyltransferase from Syntrophomonas wolfei subsp. wolfei (strain DSM 2245B / Goettingen).